We begin with the raw amino-acid sequence, 403 residues long: S-adenosylmethionine synthase (403 aa).

Residue histidine 17 coordinates ATP. Mg(2+) is bound at residue aspartate 19. Glutamate 45 contributes to the K(+) binding site. L-methionine contacts are provided by glutamate 58 and glutamine 104. Residues glutamine 104–threonine 114 form a flexible loop region. Residues aspartate 179–lysine 181, lysine 250–phenylalanine 251, aspartate 259, arginine 265–lysine 266, alanine 282, and lysine 286 contribute to the ATP site. Aspartate 259 is a binding site for L-methionine. L-methionine is bound at residue lysine 290.

The protein belongs to the AdoMet synthase family. As to quaternary structure, homotetramer; dimer of dimers. Mg(2+) is required as a cofactor. It depends on K(+) as a cofactor.

It is found in the cytoplasm. The catalysed reaction is L-methionine + ATP + H2O = S-adenosyl-L-methionine + phosphate + diphosphate. Its pathway is amino-acid biosynthesis; S-adenosyl-L-methionine biosynthesis; S-adenosyl-L-methionine from L-methionine: step 1/1. Its function is as follows. Catalyzes the formation of S-adenosylmethionine (AdoMet) from methionine and ATP. The overall synthetic reaction is composed of two sequential steps, AdoMet formation and the subsequent tripolyphosphate hydrolysis which occurs prior to release of AdoMet from the enzyme. The polypeptide is S-adenosylmethionine synthase (Mycobacterium marinum (strain ATCC BAA-535 / M)).